The following is a 386-amino-acid chain: Benzoyl-CoA reductase subunit C (386 aa).

It belongs to the FldB/FldC dehydratase alpha/beta subunit family. Heterotetramer composed of A, B, C, and D subunits. Requires iron-sulfur cluster as cofactor. An oxidized flavin is required as a cofactor.

It carries out the reaction cyclohexa-1,5-diene-1-carbonyl-CoA + oxidized 2[4Fe-4S]-[ferredoxin] + 2 ADP + 2 phosphate = reduced 2[4Fe-4S]-[ferredoxin] + benzoyl-CoA + 2 ATP + 2 H2O. It catalyses the reaction 3-hydroxybenzoyl-CoA + AH2 + 2 ATP + 2 H2O = 3-hydroxycyclohexa-1,5-diene-1-carbonyl-CoA + A + 2 ADP + 2 phosphate + 2 H(+). Catalyzes the anaerobic reduction of benzoyl-CoA and 3-hydroxybenzoyl-CoA to form cyclohexa-1,5-diene-1-carbonyl-CoA and 3-hydroxycyclohexa-1,5-diene-1-carbonyl-CoA, respectively. The enzyme also reduces other benzoyl-CoA analogs with small substituents at the aromatic ring. This chain is Benzoyl-CoA reductase subunit C (bcrC), found in Thauera aromatica.